Reading from the N-terminus, the 289-residue chain is Protease HtpX (289 aa).

2 helical membrane-spanning segments follow: residues 6–26 and 38–58; these read ILFL…LNII and TGIL…SLFM. His-144 lines the Zn(2+) pocket. Glu-145 is a catalytic residue. A Zn(2+)-binding site is contributed by His-148. The next 2 membrane-spanning stretches (helical) occupy residues 152–172 and 194–214; these read GDMV…IFLS and LVFW…ATMI. Glu-223 is a binding site for Zn(2+).

Belongs to the peptidase M48B family. The cofactor is Zn(2+).

Its subcellular location is the cell inner membrane. This Haemophilus ducreyi (strain 35000HP / ATCC 700724) protein is Protease HtpX.